Here is a 217-residue protein sequence, read N- to C-terminus: GTP cyclohydrolase 1 (217 aa).

The Zn(2+) site is built by Cys108, His111, and Cys179.

Belongs to the GTP cyclohydrolase I family. In terms of assembly, toroid-shaped homodecamer, composed of two pentamers of five dimers.

It catalyses the reaction GTP + H2O = 7,8-dihydroneopterin 3'-triphosphate + formate + H(+). It participates in cofactor biosynthesis; 7,8-dihydroneopterin triphosphate biosynthesis; 7,8-dihydroneopterin triphosphate from GTP: step 1/1. The protein is GTP cyclohydrolase 1 of Shewanella denitrificans (strain OS217 / ATCC BAA-1090 / DSM 15013).